The sequence spans 236 residues: DNA repair protein RecO (236 aa).

The protein belongs to the RecO family.

Functionally, involved in DNA repair and RecF pathway recombination. In Cellvibrio japonicus (strain Ueda107) (Pseudomonas fluorescens subsp. cellulosa), this protein is DNA repair protein RecO.